The primary structure comprises 637 residues: Chaperone protein HtpG (637 aa).

The segment at 1–345 (MSQQETHGFQ…SNDLPLNVSR (345 aa)) is a; substrate-binding. Positions 346–562 (EILQDNHITK…EGEMSTQMIK (217 aa)) are b. The interval 563 to 637 (LMQAAGQPVP…MNQMLLANMK (75 aa)) is c.

This sequence belongs to the heat shock protein 90 family. In terms of assembly, homodimer.

The protein resides in the cytoplasm. In terms of biological role, molecular chaperone. Has ATPase activity. This chain is Chaperone protein HtpG, found in Shewanella putrefaciens (strain CN-32 / ATCC BAA-453).